Here is a 406-residue protein sequence, read N- to C-terminus: Probable G-protein coupled receptor tkr-1 (406 aa).

At 1-47 (MNQEFLIQLGERACKNAENLTLPAELEGIFFCAPSSRESLATQVFVA) the chain is on the extracellular side. The helical transmembrane segment at 48 to 68 (IAFVLLMATAIIGNSVVMWII) threads the bilayer. Topologically, residues 69 to 76 (YQHKVMHY) are cytoplasmic. A helical membrane pass occupies residues 77–97 (GFNYFLFNMAFADLLIALFNV). The Extracellular segment spans residues 98–115 (GTSWTYNLYYDWWYGDLC). Residues 116 to 136 (TLTSFFGIAPTTVSVCSMMAL) form a helical membrane-spanning segment. The Cytoplasmic portion of the chain corresponds to 137-158 (SWDRCQAVVNPLQKRPLSRKRS). The helical transmembrane segment at 159–179 (VIAILIIWVVSTVTALPFAIA) threads the bilayer. At 180–204 (ASVNSLYTYDVVTSTVSKAHVCSAP) the chain is on the extracellular side. Residues 205–225 (VNTFFEKVLFGIQYALPIIIL) form a helical membrane-spanning segment. Over 226–261 (GSTFTRIAVAFRATNEATDSSLKNNHTRAKSKAVKM) the chain is Cytoplasmic. Residues 262–282 (LFLMVVAFVVCWLPYHIYHAF) form a helical membrane-spanning segment. The Extracellular segment spans residues 283 to 297 (ALEEFFDAARGKYAY). Residues 298–318 (LLIYWIAMSSCAYNPIIYCFA) traverse the membrane as a helical segment. At 319–406 (NERFRIGFRY…KVHLLSCHER (88 aa)) the chain is on the cytoplasmic side.

It belongs to the G-protein coupled receptor 1 family.

The protein resides in the cell membrane. Functionally, not known. Putative receptor. The chain is Probable G-protein coupled receptor tkr-1 (tkr-1) from Caenorhabditis elegans.